Consider the following 409-residue polypeptide: Elongation factor 1-gamma (409 aa).

Residues 2-81 form the GST N-terminal domain; it reads SVGTVYGKIG…YLASLNKTRA (80 aa). A GST C-terminal domain is found at 86–212; that stretch reads TAEEKAKVLQ…EPLKFIDQPL (127 aa). Residues 219 to 248 are compositionally biased toward basic and acidic residues; sequence NKEAAPAKKAEKKKDEKKKNAPKPQAERPA. Residues 219–261 form a disordered region; that stretch reads NKEAAPAKKAEKKKDEKKKNAPKPQAERPAKPPKHPLASAPNG. An EF-1-gamma C-terminal domain is found at 251 to 409; that stretch reads PKHPLASAPN…REVADGKVCK (159 aa).

EF-1 is composed of four subunits: alpha, beta, delta, and gamma.

Functionally, probably plays a role in anchoring the complex to other cellular components. The polypeptide is Elongation factor 1-gamma (tef3) (Schizosaccharomyces pombe (strain 972 / ATCC 24843) (Fission yeast)).